A 232-amino-acid chain; its full sequence is Phosphatidylserine decarboxylase proenzyme (232 aa).

The active-site Schiff-base intermediate with substrate; via pyruvic acid is the serine 190. The residue at position 190 (serine 190) is a Pyruvic acid (Ser); by autocatalysis.

It belongs to the phosphatidylserine decarboxylase family. PSD-A subfamily. As to quaternary structure, heterodimer of a large membrane-associated beta subunit and a small pyruvoyl-containing alpha subunit. Pyruvate serves as cofactor. Is synthesized initially as an inactive proenzyme. Formation of the active enzyme involves a self-maturation process in which the active site pyruvoyl group is generated from an internal serine residue via an autocatalytic post-translational modification. Two non-identical subunits are generated from the proenzyme in this reaction, and the pyruvate is formed at the N-terminus of the alpha chain, which is derived from the carboxyl end of the proenzyme. The post-translation cleavage follows an unusual pathway, termed non-hydrolytic serinolysis, in which the side chain hydroxyl group of the serine supplies its oxygen atom to form the C-terminus of the beta chain, while the remainder of the serine residue undergoes an oxidative deamination to produce ammonia and the pyruvoyl prosthetic group on the alpha chain.

It localises to the cell membrane. It catalyses the reaction a 1,2-diacyl-sn-glycero-3-phospho-L-serine + H(+) = a 1,2-diacyl-sn-glycero-3-phosphoethanolamine + CO2. The protein operates within phospholipid metabolism; phosphatidylethanolamine biosynthesis; phosphatidylethanolamine from CDP-diacylglycerol: step 2/2. Functionally, catalyzes the formation of phosphatidylethanolamine (PtdEtn) from phosphatidylserine (PtdSer). This chain is Phosphatidylserine decarboxylase proenzyme, found in Methylocella silvestris (strain DSM 15510 / CIP 108128 / LMG 27833 / NCIMB 13906 / BL2).